Here is a 348-residue protein sequence, read N- to C-terminus: Zinc-type alcohol dehydrogenase-like protein C2E1P3.01 (348 aa).

The protein belongs to the zinc-containing alcohol dehydrogenase family. Quinone oxidoreductase subfamily.

It localises to the mitochondrion. In Schizosaccharomyces pombe (strain 972 / ATCC 24843) (Fission yeast), this protein is Zinc-type alcohol dehydrogenase-like protein C2E1P3.01.